The chain runs to 3018 residues: Genome polyprotein (3018 aa).

At Ser-2 the chain carries N-acetylserine; by host. The segment at 2 to 23 (STLPKPQRKTKRNTNRRPMDVK) is interaction with STAT1. Residues 2-58 (STLPKPQRKTKRNTNRRPMDVKFPGGGQIVGGVYLLPRKGPRLGVRATRKTSERSQP) form an interaction with EIF2AK2/PKR region. Positions 2-59 (STLPKPQRKTKRNTNRRPMDVKFPGGGQIVGGVYLLPRKGPRLGVRATRKTSERSQPR) are interaction with DDX3X. The tract at residues 2–75 (STLPKPQRKT…PKARQPQGRH (74 aa)) is disordered. At 2–168 (STLPKPQRKT…EDGINYATGN (167 aa)) the chain is on the cytoplasmic side. 2 short sequence motifs (nuclear localization signal) span residues 5 to 13 (PKPQRKTKR) and 38 to 43 (PRKGPR). Over residues 7–16 (PQRKTKRNTN) the composition is skewed to basic residues. Ser-53 is modified (phosphoserine; by host). 2 short sequence motifs (nuclear localization signal) span residues 58–64 (PRGRRQP) and 66–71 (PKARQP). Residues Ser-99 and Ser-116 each carry the phosphoserine; by host modification. The segment at 112 to 152 (PRRRSRNLGKVIDTLTCGFADLMWYIPVVGAPLGGVAAALA) is important for endoplasmic reticulum and mitochondrial localization. Residues 122-173 (VIDTLTCGFADLMWYIPVVGAPLGGVAAALAHGVRAIEDGINYATGNLPGCS) form an interaction with APOA2 region. The interval 164-167 (YATG) is important for lipid droplets localization. Residues 169 to 189 (LPGCSFSIFLLALLSCLTTPA) traverse the membrane as a helical segment. Residues 178–191 (LLALLSCLTTPASA) constitute a propeptide, ER anchor for the core protein, removed in mature form by host signal peptidase. At 190–358 (SALTYGNSSG…FGGHWGILLA (169 aa)) the chain is on the lumenal side. N-linked (GlcNAc...) asparagine; by host glycosylation is found at Asn-196, Asn-209, Asn-234, and Asn-250. Positions 265–296 (LAGAAVVCSSLYIGDLCGSLFLAGQLFAFQPR) are important for fusion. N-linked (GlcNAc...) asparagine; by host glycosylation is present at Asn-305. A helical transmembrane segment spans residues 359 to 379 (VAYFGMAGNWLKVLAVLFLFA). The Lumenal segment spans residues 380–729 (GVEAQTMIAH…WEYIVLMFLV (350 aa)). Residues 385–411 (TMIAHGVSQTTSGFASLLTPGAKQNIQ) form an HVR1 region. N-linked (GlcNAc...) (high mannose) asparagine; by host glycosylation is found at Asn-416, Asn-422, and Asn-429. 4 disulfides stabilise this stretch: Cys-428–Cys-552, Cys-451–Cys-458, Cys-486–Cys-494, and Cys-503–Cys-508. N-linked (GlcNAc...) asparagine; by host glycosylation is present at Asn-447. Residues 474-478 (KNVSG) form an HVR2 region. A glycan (N-linked (GlcNAc...) asparagine; by host) is linked at Asn-475. The tract at residues 480–493 (SDDRPYCWHYAPRP) is CD81-binding 1. N-linked (GlcNAc...) asparagine; by host glycosylation occurs at Asn-532. The CD81-binding 2 stretch occupies residues 544 to 551 (PPTGGWFG). Asn-556 carries N-linked (GlcNAc...) asparagine; by host glycosylation. A disulfide bridge links Cys-564 with Cys-569. N-linked (GlcNAc...) asparagine; by host glycosylation occurs at Asn-577. Cystine bridges form between Cys-585/Cys-589, Cys-601/Cys-624, and Cys-611/Cys-648. 2 N-linked (GlcNAc...) (high mannose) asparagine; by host glycosylation sites follow: Asn-627 and Asn-649. A disulfide bridge links Cys-656 with Cys-681. Residues 664–675 (IEMSPLLFSTTQ) form a PKR/eIF2-alpha phosphorylation homology domain (PePHD) region. The chain crosses the membrane as a helical span at residues 730–750 (LADARICTCLWLMLLISTVEA). Residues 751–761 (AVERLVVLNAA) lie on the Lumenal side of the membrane. A helical membrane pass occupies residues 762–782 (SAAGTAGWWWAVLFLCCVWYV). The Cytoplasmic portion of the chain corresponds to 783-786 (KGRL). Residues 787-807 (VPACTYMALGMWPLLLTILAL) traverse the membrane as a helical segment. Residues 808–817 (PPRAYAMDNE) lie on the Lumenal side of the membrane. The chain crosses the membrane as a helical span at residues 818-838 (QAASLGAVGLLVITIFSITPM). Residues 839 to 885 (YKKLLNCFIWWNQYFLARAEAMVHEWVPDLRVRGGRDSIILLTCLLH) lie on the Cytoplasmic side of the membrane. The helical transmembrane segment at 886–906 (PQLGFEVTKILLAVLAPLYIL) threads the bilayer. The Lumenal portion of the chain corresponds to 907 to 932 (QYSLLKVPYFVRAHILLRACLLVRRL). Residues 907-1030 (QYSLLKVPYF…DMQRGGWKLL (124 aa)) enclose the Peptidase C18 domain. The interval 908 to 1210 (YSLLKVPYFV…PVENMETTMR (303 aa)) is protease NS2-3. The S-palmitoyl cysteine; by host moiety is linked to residue Cys-926. The helical transmembrane segment at 933-953 (AGGKYVQACLLRLGAWTGTFV) threads the bilayer. Residues 933-953 (AGGKYVQACLLRLGAWTGTFV) form an interaction with host SCPS1 region. Topologically, residues 954-1661 (YDHLAPLSDW…CMSADLEVIT (708 aa)) are cytoplasmic. Active-site for protease NS2 activity; shared with dimeric partner residues include His-956, Glu-976, and Cys-997. In terms of domain architecture, Peptidase S29 spans 1031-1212 (APITAYAQQT…ENMETTMRSP (182 aa)). Residues His-1087 and Asp-1111 each act as charge relay system; for serine protease NS3 activity in the active site. Zn(2+) contacts are provided by Cys-1127 and Cys-1129. The Charge relay system; for serine protease NS3 activity role is filled by Ser-1169. Residues Cys-1175 and His-1179 each contribute to the Zn(2+) site. 1234–1241 (APTGSGKS) contributes to the ATP binding site. Mg(2+) is bound by residues Ser-1241 and Glu-1321. Positions 1320-1323 (DECH) match the DECH box motif. Residues 1490-1502 (QRRGRTGRGKPGV) form an RNA-binding region. A helical membrane pass occupies residues 1662–1682 (STWVLVGGVLAALAAYCLSVG). The segment at 1683–1694 (CVVICGRITLTG) is NS3-binding. The Cytoplasmic segment spans residues 1683 to 1809 (CVVICGRITL…SLTSPLRTSQ (127 aa)). The helical transmembrane segment at 1810-1830 (TLLLNILGGWIAAQVAPPPAS) threads the bilayer. Residues 1831 to 1832 (TA) are Lumenal-facing. A helical transmembrane segment spans residues 1833–1853 (FVVSGLAGAAVGSIRLGRVLV). Position 1854 (Asp-1854) is a topological domain, cytoplasmic. The chain crosses the membrane as a helical span at residues 1855–1875 (VLAGYGAGVSGALVAFKIMSG). The Lumenal segment spans residues 1876–1885 (ECPSTEDMVN). Residues 1886 to 1906 (LLPALLSPGVALVGVVCAAIL) traverse the membrane as a helical segment. Topologically, residues 1907-1976 (RRHVGPAEGA…WVNEDTATPC (70 aa)) are cytoplasmic. Cys-1976 is lipidated: S-palmitoyl cysteine; by host. An intramembrane segment occupies 1977-2006 (ATSWLRDVWDWVCTVLSDFKVWLQAKLFPR). Residues 2007-2997 (LPGIPFLSCQ…YHSVSQARPR (991 aa)) are Cytoplasmic-facing. Residues Cys-2015, Cys-2033, Cys-2035, and Cys-2056 each coordinate Zn(2+). The interval 2124-2212 (EFFTEVDGVR…ASSSANQLSA (89 aa)) is FKBP8-binding. Residues 2124–2337 (EFFTEVDGVR…PVPPPRRKRL (214 aa)) form a transcriptional activation region. The tract at residues 2139–2143 (PPCKP) is interaction with non-structural protein 4A. Residues 2192 to 2215 (RRLKKGSPPSLASSSANQLSAPSL) are disordered. The interaction with host SKP2 stretch occupies residues 2193 to 2445 (RLKKGSPPSL…ALITPCAAEE (253 aa)). Residues Ser-2198, Ser-2201, Ser-2205, Ser-2211, and Ser-2214 each carry the phosphoserine; by host modification. A compositionally biased stretch (low complexity) spans 2198–2215 (SPPSLASSSANQLSAPSL). The ISDR stretch occupies residues 2214–2253 (SLRATCTTSQKHPEMELLQANLLWKHEMGSHIPRVQSENK). The tract at residues 2214 to 2279 (SLRATCTTSQ…REISVSVECH (66 aa)) is interaction with EIF2AK2/PKR. The tract at residues 2253-2311 (KVVVLDSFELYPLEYEEREISVSVECHRQPRCKFPPVFPVWARPDNNPPFIQAWQMPGY) is NS4B-binding. The segment at 2304 to 2382 (QAWQMPGYEP…SITSPVPPDP (79 aa)) is V3. The SH3-binding motif lies at 2327-2330 (APVP). The short motif at 2332 to 2340 (PRRKRLVHL) is the Nuclear localization signal element. Lys-2355 participates in a covalent cross-link: Glycyl lysine isopeptide (Lys-Gly) (interchain with G-Cter in ubiquitin). The segment at 2359–2417 (ESSNDPGPSSDSGLSITSPVPPDPTTPEDAGSEAESYSSMPPLEGEPGDPDLSSGSWST) is disordered. The span at 2360–2373 (SSNDPGPSSDSGLS) shows a compositional bias: low complexity. Phosphoserine; by host is present on residues Ser-2456 and Ser-2469. Positions 2641–2759 (PMGFSYDTRC…ICESAGVQED (119 aa)) constitute a RdRp catalytic domain. Residues Asp-2647, Asp-2745, and Asp-2746 each coordinate Mg(2+). The chain crosses the membrane as a helical span at residues 2998–3018 (FLLLGLLLLTVGVGIFLLPAR).

Belongs to the hepacivirus polyprotein family. As to quaternary structure, homooligomer. Interacts with E1 (via C-terminus). Interacts with the non-structural protein 5A. Interacts (via N-terminus) with host STAT1 (via SH2 domain); this interaction results in decreased STAT1 phosphorylation and ubiquitin-mediated proteasome-dependent STAT1 degradation, leading to decreased IFN-stimulated gene transcription. Interacts with host STAT3; this interaction constitutively activates STAT3. Interacts with host LTBR receptor. Interacts with host TNFRSF1A receptor and possibly induces apoptosis. Interacts with host HNRPK. Interacts with host YWHAE. Interacts with host UBE3A/E6AP. Interacts with host DDX3X. Interacts with host APOA2. Interacts with host RXRA protein. Interacts with host SP110 isoform 3/Sp110b; this interaction sequesters the transcriptional corepressor SP110 away from the nucleus. Interacts with host CREB3 nuclear transcription protein; this interaction triggers cell transformation. Interacts with host ACY3. Interacts with host C1QR1. Interacts with host RBM24; this interaction, which enhances the interaction of the mature core protein with 5'-UTR, may inhibit viral translation and favor replication. Interacts with host EIF2AK2/PKR; this interaction induces the autophosphorylation of EIF2AK2. Part of the viral assembly initiation complex composed of NS2, E1, E2, NS3, NS4A, NS5A and the mature core protein. Forms a heterodimer with envelope glycoprotein E2. Interacts with mature core protein. Interacts with protease NS2. The heterodimer E1/E2 interacts with host CLDN1; this interaction plays a role in viral entry into host cell. Interacts with host SPSB2 (via C-terminus). Part of the viral assembly initiation complex composed of NS2, E1, E2, NS3, NS4A, NS5A and the mature core protein. Interacts with host NEURL3; this interaction prevents E1 binding to glycoprotein E2. In terms of assembly, forms a heterodimer with envelope glycoprotein E1. Interacts with host CD81 and SCARB1 receptors; these interactions play a role in viral entry into host cell. Interacts with host EIF2AK2/PKR; this interaction inhibits EIF2AK2 and probably allows the virus to evade the innate immune response. Interacts with host CD209/DC-SIGN and CLEC4M/DC-SIGNR. Interact with host SPCS1; this interaction is essential for viral particle assembly. Interacts with protease NS2. The heterodimer E1/E2 interacts with host CLDN1; this interaction plays a role in viral entry into host cell. Part of the viral assembly initiation complex composed of NS2, E1, E2, NS3, NS4A, NS5A and the mature core protein. Interacts with host SLC3A2/4F2hc; the interaction may facilitate viral entry into host cell. Interacts with human PLSCR1. As to quaternary structure, homohexamer. Homoheptamer. Interacts with protease NS2. Homodimer. Interacts with host SPCS1; this interaction is essential for viral particle assembly. Interacts with envelope glycoprotein E1. Interacts with envelope glycoprotein E2. Interacts with viroporin p7. Interacts with serine protease/helicase NS3. Part of the replication complex composed of NS2, NS3, NS4A, NS4B, NS5A and the RNA-directed RNA polymerase embedded in an ER-derived membranous web. Part of the viral assembly initiation complex composed of NS2, E1, E2, NS3, NS4A, NS5A and the mature core protein. In terms of assembly, interacts with protease NS2. Interacts with non-structural protein 4A; this interaction stabilizes the folding of NS3 serine protease. NS3-NS4A interaction is essential for NS3 activation and allows membrane anchorage of the latter. NS3/NS4A complex also prevents phosphorylation of host IRF3, thus preventing the establishment of dsRNA induced antiviral state. Interacts with host MAVS; this interaction leads to the cleavage and inhibition of host MAVS. Interacts with host TICAM1; this interaction leads to the cleavage and inhibition of host TICAM1. Interacts with host TANK-binding kinase/TBK1; this interaction results in the inhibition of the association between TBK1 and IRF3, which leads to the inhibition of IRF3 activation. Interacts with host RBM24. Part of the replication complex composed of NS2, NS3, NS4A, NS4B, NS5A and the RNA-directed RNA polymerase embedded in an ER-derived membranous web. Part of the viral assembly initiation complex composed of NS2, E1, E2, NS3, NS4A, NS5A and the mature core protein. As to quaternary structure, interacts with NS3 serine protease; this interaction stabilizes the folding of NS3 serine protease. NS3-NS4A interaction is essential for NS3 activation and allows membrane anchorage of the latter. Interacts with non-structural protein 5A (via N-terminus). Part of the replication complex composed of NS2, NS3, NS4A, NS4B, NS5A and the RNA-directed RNA polymerase embedded in an ER-derived membranous web. Part of the viral assembly initiation complex composed of NS2, E1, E2, NS3, NS4A, NS5A and the mature core protein. Homomultimer. Interacts with non-structural protein NS5A. Interacts with host PLA2G4C; this interaction likely initiates the recruitment of replication complexes to lipid droplets. Interacts with host STING; this interaction disrupts the interaction between STING and TBK1 thereby suppressing the interferon signaling. Part of the replication complex composed of NS2, NS3, NS4A, NS4B, NS5A and the RNA-directed RNA polymerase embedded in an ER-derived membranous web. In terms of assembly, monomer. Homodimer; dimerization is required for RNA-binding. Interacts with the mature core protein. Interacts (via N-terminus) with non-structural protein 4A. Interacts with non-structural protein 4B. Interacts (via region D2) with RNA-directed RNA polymerase. Part of the viral assembly initiation complex composed of NS2, E1, E2, NS3, NS4A, NS5A and the mature core protein. Part of the replication complex composed of NS2, NS3, NS4A, NS4B, NS5A and the RNA-directed RNA polymerase embedded in an ER-derived membranous web. Interacts with host GRB2. Interacts with host BIN1. Interacts with host PIK3R1. Interacts with host SRCAP. Interacts with host FKBP8. Interacts (via C-terminus) with host VAPB (via MSP domain). Interacts with host EIF2AK2/PKR; this interaction leads to disruption of EIF2AK2 dimerization by NS5A and probably allows the virus to evade the innate immune response. Interacts (via N-terminus) with host PACSIN2 (via N-terminus); this interaction attenuates protein kinase C alpha-mediated phosphorylation of PACSIN2 by disrupting the interaction between PACSIN2 and PRKCA. Interacts (via N-terminus) with host SRC kinase (via SH2 domain). Interacts with most Src-family kinases. Interacts with host IFI27 and SKP2; promotes the ubiquitin-mediated proteasomal degradation of NS5A. Interacts with host GPS2. Interacts with host TNFRSF21; this interaction allows the modulation by the virus of JNK, p38 MAPK, STAT3, and Akt signaling pathways in a DR6-dependent manner. Interacts (via N-terminus) with host CIDEB (via N-terminus); this interaction seems to regulate the association of HCV particles with APOE. Interacts with host CHKA/Choline Kinase-alpha; CHKA bridges host PI4KA and NS5A and potentiates NS5A-stimulated PI4KA activity, which then facilitates the targeting of the ternary complex to the ER for viral replication. Interacts with host SPSB2 (via C-terminus); this interaction targets NS5A for ubiquitination and degradation. Interacts with host RAB18; this interaction may promote the association of NS5A and other replicase components with lipid droplets. Interacts (via region D2) with host PPIA/CYPA; the interaction stimulates RNA-binding ability of NS5A and is dependent on the peptidyl-prolyl cis-trans isomerase activity of PPIA/CYPA. Interacts with host TRIM14; this interaction induces the degradation of NS5A. As to quaternary structure, homooligomer. Interacts with non-structural protein 5A. Interacts with host VAPB. Interacts with host PRK2/PKN2. Interacts with host HNRNPA1 and SEPT6; these interactions facilitate viral replication. Part of the replication complex composed of NS2, NS3, NS4A, NS4B, NS5A and the RNA-directed RNA polymerase. Zn(2+) serves as cofactor. Mg(2+) is required as a cofactor. Specific enzymatic cleavages in vivo yield mature proteins. The structural proteins, core, E1, E2 and p7 are produced by proteolytic processing by host signal peptidases. The core protein precursor is synthesized as a 23 kDa, which is retained in the ER membrane through the hydrophobic signal peptide. Cleavage by the signal peptidase releases the 21 kDa mature core protein. The cleavage of the core protein precursor occurs between aminoacids 176 and 188 but the exact cleavage site is not known. Some degraded forms of the core protein appear as well during the course of infection. The other proteins (p7, NS2, NS3, NS4A, NS4B, NS5A and NS5B) are cleaved by the viral proteases. Autoprocessing between NS2 and NS3 is mediated by the NS2 cysteine protease catalytic domain and regulated by the NS3 N-terminal domain. Post-translationally, phosphorylated by host PKC and PKA. In terms of processing, ubiquitinated; mediated by UBE3A and leading to core protein subsequent proteasomal degradation. Highly N-glycosylated. Post-translationally, palmitoylation is required for NS2/3 autoprocessing and E2 recruitment to membranes. In terms of processing, palmitoylated. This modification may play a role in its polymerization or in protein-protein interactions. Phosphorylated on serines in a basal form termed p56. p58 is a hyperphosphorylated form of p56. p56 and p58 coexist in the cell in roughly equivalent amounts. Hyperphosphorylation is dependent on the presence of NS4A. Host CSNK1A1/CKI-alpha or RPS6KB1 kinases may be responsible for NS5A phosphorylation. Post-translationally, tyrosine phosphorylation is essential for the interaction with host SRC. In terms of processing, the N-terminus is phosphorylated by host PRK2/PKN2.

It localises to the host endoplasmic reticulum membrane. Its subcellular location is the host mitochondrion membrane. The protein localises to the virion. The protein resides in the host cytoplasm. It is found in the host nucleus. It localises to the host lipid droplet. Its subcellular location is the virion membrane. The protein localises to the host mitochondrion. The protein resides in the host cell membrane. It is found in the host perinuclear region. The catalysed reaction is Hydrolysis of four peptide bonds in the viral precursor polyprotein, commonly with Asp or Glu in the P6 position, Cys or Thr in P1 and Ser or Ala in P1'.. The enzyme catalyses a ribonucleoside 5'-triphosphate + H2O = a ribonucleoside 5'-diphosphate + phosphate + H(+). It catalyses the reaction ATP + H2O = ADP + phosphate + H(+). It carries out the reaction RNA(n) + a ribonucleoside 5'-triphosphate = RNA(n+1) + diphosphate. With respect to regulation, inhibited by the antiviral drug hexamethylene amiloride. Inhibition by amantadine appears to be genotype-dependent. Also inhibited by long-alkyl-chain iminosugar derivatives. Activity is up-regulated by PRK2/PKN2-mediated phosphorylation. Functionally, packages viral RNA to form a viral nucleocapsid, and promotes virion budding. Participates in the viral particle production as a result of its interaction with the non-structural protein 5A. Binds RNA and may function as a RNA chaperone to induce the RNA structural rearrangements taking place during virus replication. Modulates viral translation initiation by interacting with viral IRES and 40S ribosomal subunit. Affects various cell signaling pathways, host immunity and lipid metabolism. Prevents the establishment of cellular antiviral state by blocking the interferon-alpha/beta (IFN-alpha/beta) and IFN-gamma signaling pathways and by blocking the formation of phosphorylated STAT1 and promoting ubiquitin-mediated proteasome-dependent degradation of STAT1. Activates STAT3 leading to cellular transformation. Regulates the activity of cellular genes, including c-myc and c-fos. May repress the promoter of p53, and sequester CREB3 and SP110 isoform 3/Sp110b in the cytoplasm. Represses cell cycle negative regulating factor CDKN1A, thereby interrupting an important check point of normal cell cycle regulation. Targets transcription factors involved in the regulation of inflammatory responses and in the immune response: suppresses TNF-induced NF-kappa-B activation, and activates AP-1. Binds to dendritic cells (DCs) via C1QR1, resulting in down-regulation of T-lymphocytes proliferation. Alters lipid metabolism by interacting with hepatocellular proteins involved in lipid accumulation and storage. Induces up-regulation of FAS promoter activity, and thereby contributes to the increased triglyceride accumulation in hepatocytes (steatosis). Its function is as follows. Forms a heterodimer with envelope glycoprotein E2, which mediates virus attachment to the host cell, virion internalization through clathrin-dependent endocytosis and fusion with host membrane. Fusion with the host cell is most likely mediated by both E1 and E2, through conformational rearrangements of the heterodimer required for fusion rather than a classical class II fusion mechanism. E1/E2 heterodimer binds host apolipoproteins such as APOB and ApoE thereby forming a lipo-viro-particle (LVP). APOE associated to the LVP allows the initial virus attachment to cell surface receptors such as the heparan sulfate proteoglycans (HSPGs), syndecan-1 (SDC1), syndecan-1 (SDC2), the low-density lipoprotein receptor (LDLR) and scavenger receptor class B type I (SCARB1). The cholesterol transfer activity of SCARB1 allows E2 exposure and binding of E2 to SCARB1 and the tetraspanin CD81. E1/E2 heterodimer binding on CD81 activates the epithelial growth factor receptor (EGFR) signaling pathway. Diffusion of the complex E1-E2-EGFR-SCARB1-CD81 to the cell lateral membrane allows further interaction with Claudin 1 (CLDN1) and occludin (OCLN) to finally trigger HCV entry. Forms a heterodimer with envelope glycoprotein E1, which mediates virus attachment to the host cell, virion internalization through clathrin-dependent endocytosis and fusion with host membrane. Fusion with the host cell is most likely mediated by both E1 and E2, through conformational rearrangements of the heterodimer required for fusion rather than a classical class II fusion mechanism. The interaction between envelope glycoprotein E2 and host apolipoprotein E/APOE allows the proper assembly, maturation and infectivity of the viral particles. This interaction is probably promoted via the up-regulation of cellular autophagy by the virus. E1/E2 heterodimer binds host apolipoproteins such as APOB and APOE thereby forming a lipo-viro-particle (LVP). APOE associated to the LVP allows the initial virus attachment to cell surface receptors such as the heparan sulfate proteoglycans (HSPGs), syndecan-1 (SDC1), syndecan-1 (SDC2), the low-density lipoprotein receptor (LDLR) and scavenger receptor class B type I (SCARB1). The cholesterol transfer activity of SCARB1 allows E2 exposure and binding of E2 to SCARB1 and the tetraspanin CD81. E1/E2 heterodimer binding on CD81 activates the epithelial growth factor receptor (EGFR) signaling pathway. Diffusion of the complex E1-E2-EGFR-SCARB1-CD81 to the cell lateral membrane allows further interaction with Claudin 1 (CLDN1) and occludin (OCLN) to finally trigger HCV entry. Inhibits host EIF2AK2/PKR activation, preventing the establishment of an antiviral state. Viral ligand for CD209/DC-SIGN and CLEC4M/DC-SIGNR, which are respectively found on dendritic cells (DCs), and on liver sinusoidal endothelial cells and macrophage-like cells of lymph node sinuses. These interactions allow the capture of circulating HCV particles by these cells and subsequent facilitated transmission to permissive cells such as hepatocytes and lymphocyte subpopulations. The interaction between E2 and host amino acid transporter complex formed by SLC3A2 and SLC7A5/LAT1 may facilitate viral entry into host cell. In terms of biological role, ion channel protein that acts as a viroporin and plays an essential role in the assembly, envelopment and secretion of viral particles. Regulates the host cell secretory pathway, which induces the intracellular retention of viral glycoproteins and favors assembly of viral particles. Creates a pore in acidic organelles and releases Ca(2+) and H(+) in the cytoplasm of infected cells, leading to a productive viral infection. High levels of cytoplasmic Ca(2+) may trigger membrane trafficking and transport of viral ER-associated proteins to viroplasms, sites of viral genome replication. This ionic imbalance induces the assembly of the inflammasome complex, which triggers the maturation of pro-IL-1beta into IL-1beta through the action of caspase-1. Targets also host mitochondria and induces mitochondrial depolarization. In addition of its role as a viroporin, acts as a lipid raft adhesion factor. Functionally, cysteine protease required for the proteolytic auto-cleavage between the non-structural proteins NS2 and NS3. The N-terminus of NS3 is required for the function of NS2 protease (active region NS2-3). Promotes the initiation of viral particle assembly by mediating the interaction between structural and non-structural proteins. Its function is as follows. Displays three enzymatic activities: serine protease with a chymotrypsin-like fold, NTPase and RNA helicase. NS3 serine protease, in association with NS4A, is responsible for the cleavages of NS3-NS4A, NS4A-NS4B, NS4B-NS5A and NS5A-NS5B. The NS3/NS4A complex prevents phosphorylation of host IRF3, thus preventing the establishment of dsRNA induced antiviral state. The NS3/NS4A complex induces host amino acid transporter component SLC3A2, thus contributing to HCV propagation. NS3 RNA helicase binds to RNA and unwinds both dsDNA and dsRNA in the 3' to 5' direction, and likely resolves RNA complicated stable secondary structures in the template strand. Binds a single ATP and catalyzes the unzipping of a single base pair of dsRNA. Inhibits host antiviral proteins TBK1 and IRF3 thereby preventing the establishment of an antiviral state. Cleaves host MAVS/CARDIF thereby preventing the establishment of an antiviral state. Cleaves host TICAM1/TRIF, thereby disrupting TLR3 signaling and preventing the establishment of an antiviral state. Induces a specific membrane alteration that serves as a scaffold for the virus replication complex. This membrane alteration gives rise to the so-called ER-derived membranous web that contains the replication complex. NS4B self-interaction contributes to its function in membranous web formation. Promotes host TRIF protein degradation in a CASP8-dependent manner thereby inhibiting host TLR3-mediated interferon signaling. Disrupts the interaction between STING and TBK1 contributing to the inhibition of interferon signaling. In terms of biological role, phosphorylated protein that is indispensable for viral replication and assembly. Both hypo- and hyperphosphorylated states are required for the viral life cycle. The hyperphosphorylated form of NS5A is an inhibitor of viral replication. Involved in RNA-binding and especially in binding to the viral genome. Zinc is essential for RNA-binding. Participates in the viral particle production as a result of its interaction with the mature viral core protein. Its interaction with host VAPB may target the viral replication complex to vesicles. Down-regulates viral IRES translation initiation. Mediates interferon resistance, presumably by interacting with and inhibiting host EIF2AK2/PKR. Prevents BIN1-induced apoptosis. Acts as a transcriptional activator of some host genes important for viral replication when localized in the nucleus. Via the interaction with host PACSIN2, modulates lipid droplet formation in order to promote virion assembly. Modulates TNFRSF21/DR6 signaling pathway for viral propagation. Functionally, RNA-dependent RNA polymerase that performs primer-template recognition and RNA synthesis during viral replication. Initiates RNA transcription/replication at a flavin adenine dinucleotide (FAD), resulting in a 5'- FAD cap on viral RNAs. In this way, recognition of viral 5' RNA by host pattern recognition receptors can be bypassed, thereby evading activation of antiviral pathways. This chain is Genome polyprotein, found in Hepatitis C virus genotype 6a (isolate EUHK2) (HCV).